Reading from the N-terminus, the 102-residue chain is Large ribosomal subunit protein bL21 (102 aa).

It belongs to the bacterial ribosomal protein bL21 family. As to quaternary structure, part of the 50S ribosomal subunit. Contacts protein L20.

Its function is as follows. This protein binds to 23S rRNA in the presence of protein L20. The polypeptide is Large ribosomal subunit protein bL21 (Onion yellows phytoplasma (strain OY-M)).